The following is a 668-amino-acid chain: Protein PLASTID TRANSCRIPTIONALLY ACTIVE 10 (668 aa).

Residues 1–40 (MQICQTKLNFTFPNPTNPNFCKPKALQWSPPRRISLLPCR) constitute a chloroplast transit peptide. The 69-residue stretch at 272 to 340 (GMVCEGTVTT…YRFRFPLELR (69 aa)) folds into the S1 motif domain. A compositionally biased stretch (basic and acidic residues) spans 362–391 (RDGDTNPDEIRRDCGRPPEPRKDPGSKPEE). The segment at 362–394 (RDGDTNPDEIRRDCGRPPEPRKDPGSKPEEEGL) is disordered. Ser-434 carries the post-translational modification Phosphoserine. A disordered region spans residues 611–668 (KRKEGSTLASQEEETESEEEEEDDDDFDDFDYSILSDESSIGYSEQQPLVNGTQVLTD). The segment covering 621-641 (QEEETESEEEEEDDDDFDDFD) has biased composition (acidic residues). The segment covering 646 to 668 (SDESSIGYSEQQPLVNGTQVLTD) has biased composition (polar residues).

Component of the transcriptionally active chromosome (TAC) complexes. Interacts with PTAC7.

It localises to the plastid. The protein localises to the chloroplast. The chain is Protein PLASTID TRANSCRIPTIONALLY ACTIVE 10 from Arabidopsis thaliana (Mouse-ear cress).